We begin with the raw amino-acid sequence, 206 residues long: Pyridoxal 5'-phosphate synthase subunit PdxT (206 aa).

59 to 61 (GES) is an L-glutamine binding site. The active-site Nucleophile is the C91. Residues R123 and 151-152 (IR) contribute to the L-glutamine site. Catalysis depends on charge relay system residues H187 and E189.

This sequence belongs to the glutaminase PdxT/SNO family. As to quaternary structure, in the presence of PdxS, forms a dodecamer of heterodimers. Only shows activity in the heterodimer.

The catalysed reaction is aldehydo-D-ribose 5-phosphate + D-glyceraldehyde 3-phosphate + L-glutamine = pyridoxal 5'-phosphate + L-glutamate + phosphate + 3 H2O + H(+). It catalyses the reaction L-glutamine + H2O = L-glutamate + NH4(+). It participates in cofactor biosynthesis; pyridoxal 5'-phosphate biosynthesis. Catalyzes the hydrolysis of glutamine to glutamate and ammonia as part of the biosynthesis of pyridoxal 5'-phosphate. The resulting ammonia molecule is channeled to the active site of PdxS. The chain is Pyridoxal 5'-phosphate synthase subunit PdxT from Mycobacterium sp. (strain JLS).